We begin with the raw amino-acid sequence, 310 residues long: Olfactory receptor 2A7 (310 aa).

At M1–M24 the chain is on the extracellular side. Residue N4 is glycosylated (N-linked (GlcNAc...) asparagine). Residues L25–I48 form a helical membrane-spanning segment. Topologically, residues S49–A56 are cytoplasmic. A helical membrane pass occupies residues P57–P78. Residues R79–Q99 are Extracellular-facing. Residues T100–Y119 form a helical membrane-spanning segment. The Cytoplasmic portion of the chain corresponds to D120–R138. A helical transmembrane segment spans residues V139–I157. At H158–N194 the chain is on the extracellular side. The helical transmembrane segment at E195–M218 threads the bilayer. The Cytoplasmic segment spans residues C219 to K235. Residues A236–Y258 traverse the membrane as a helical segment. At V259–K271 the chain is on the extracellular side. The chain crosses the membrane as a helical span at residues Y272 to L291. Topologically, residues R292–L310 are cytoplasmic.

It belongs to the G-protein coupled receptor 1 family.

It localises to the cell membrane. Functionally, odorant receptor. This chain is Olfactory receptor 2A7 (OR2A7), found in Homo sapiens (Human).